Reading from the N-terminus, the 95-residue chain is Large ribosomal subunit protein bL27 (95 aa).

A disordered region spans residues 1–21; the sequence is MAHKKGASSSRNGRDSNAQRL. Residues 7–19 show a composition bias toward polar residues; sequence ASSSRNGRDSNAQ.

This sequence belongs to the bacterial ribosomal protein bL27 family.

This Parafrankia sp. (strain EAN1pec) protein is Large ribosomal subunit protein bL27.